The following is a 316-amino-acid chain: Putative phosphoribosylaminoimidazole-succinocarboxamide synthase 2 (316 aa).

It belongs to the SAICAR synthetase family.

The enzyme catalyses 5-amino-1-(5-phospho-D-ribosyl)imidazole-4-carboxylate + L-aspartate + ATP = (2S)-2-[5-amino-1-(5-phospho-beta-D-ribosyl)imidazole-4-carboxamido]succinate + ADP + phosphate + 2 H(+). It participates in purine metabolism; IMP biosynthesis via de novo pathway; 5-amino-1-(5-phospho-D-ribosyl)imidazole-4-carboxamide from 5-amino-1-(5-phospho-D-ribosyl)imidazole-4-carboxylate: step 1/2. In Agrobacterium fabrum (strain C58 / ATCC 33970) (Agrobacterium tumefaciens (strain C58)), this protein is Putative phosphoribosylaminoimidazole-succinocarboxamide synthase 2 (purC2).